The sequence spans 417 residues: MDEVLPLFRDSHIPQIKDYQLELQNDLTKTNEAFQKNLLKNYNKILSLTDSVNDLSLNLKNVDQDFKSLCFNDEKFQLNKLTPLPYQTTTHISPPRDEEKVSIPSQNILVISNWTISINNFCNRIVTSTTPSRIFDELLLNFHELSLIPVPSKFEALVKDKCCRLQKFLVDSMKTLNLTLLQWVKLYNLLNTEFSSKWDDDLLSIFNESLFETLFNDNVQALLISSANSKDHQYHSNQQYKDAIVVDFVNSSTFRDHLIRRTVKEINTHLDTLSTLRAKLKEPETLHKLDIFHDNDTNLNDGTVSPLDDDALKQYIDTAVFYSKGLTNDTTLQIYQTVQPTIEILQNLELYKCPQETLTDLRNKLITQLQEFKTQISSRLPSPLENSTSVVDDFITSYNNHNLLQLVIDQITQLRQQ.

Position 1 is an N-acetylmethionine (M1). S305 is subject to Phosphoserine.

Belongs to the COG1 family. Component of the conserved oligomeric Golgi (COG or Sec34/Sec35) complex which consists of eight different proteins COG1-COG8.

It is found in the golgi apparatus membrane. Functionally, acts as essential component of the peripheral membrane COG complex that is involved in intra-Golgi protein trafficking. COG is located at the cis-Golgi, and regulates tethering of retrograde intra-Golgi vesicles and possibly a number of other membrane trafficking events. The protein is Conserved oligomeric Golgi complex subunit 1 (COG1) of Saccharomyces cerevisiae (strain ATCC 204508 / S288c) (Baker's yeast).